Consider the following 138-residue polypeptide: Transcription antitermination protein NusB (138 aa).

Belongs to the NusB family.

Its function is as follows. Involved in transcription antitermination. Required for transcription of ribosomal RNA (rRNA) genes. Binds specifically to the boxA antiterminator sequence of the ribosomal RNA (rrn) operons. This chain is Transcription antitermination protein NusB, found in Tolumonas auensis (strain DSM 9187 / NBRC 110442 / TA 4).